The following is a 204-amino-acid chain: Octanoyltransferase (204 aa).

Residues 27–202 (QGGEEALLLL…RFQPLLNLHL (176 aa)) form the BPL/LPL catalytic domain. Residues 65 to 72 (RGGDVTYH), 132 to 134 (SIG), and 145 to 147 (GFA) each bind substrate. The active-site Acyl-thioester intermediate is Cys-163.

This sequence belongs to the LipB family.

It localises to the cytoplasm. It carries out the reaction octanoyl-[ACP] + L-lysyl-[protein] = N(6)-octanoyl-L-lysyl-[protein] + holo-[ACP] + H(+). It participates in protein modification; protein lipoylation via endogenous pathway; protein N(6)-(lipoyl)lysine from octanoyl-[acyl-carrier-protein]: step 1/2. Functionally, catalyzes the transfer of endogenously produced octanoic acid from octanoyl-acyl-carrier-protein onto the lipoyl domains of lipoate-dependent enzymes. Lipoyl-ACP can also act as a substrate although octanoyl-ACP is likely to be the physiological substrate. The sequence is that of Octanoyltransferase from Citrifermentans bemidjiense (strain ATCC BAA-1014 / DSM 16622 / JCM 12645 / Bem) (Geobacter bemidjiensis).